A 338-amino-acid chain; its full sequence is Thiamine thiazole synthase (338 aa).

Positions methionine 1–lysine 43 are disordered. The span at lysine 11 to glutamine 21 shows a compositional bias: polar residues. Substrate-binding positions include alanine 91, glutamate 112 to serine 113, glycine 120, and cysteine 185. The residue at position 221 (cysteine 221) is a 2,3-didehydroalanine (Cys). Residues aspartate 223, histidine 238, methionine 290, and arginine 300–glycine 302 each bind substrate.

This sequence belongs to the THI4 family. In terms of assembly, homooctamer. Fe cation serves as cofactor. In terms of processing, during the catalytic reaction, a sulfide is transferred from Cys-221 to a reaction intermediate, generating a dehydroalanine residue. As to expression, highly expressed in haustoria, and only in low amounts in intercellular hyphae. Found in the basal hyphae of the uredia, but not in the pedicels and only at very low levels in uredospores.

The protein localises to the cytoplasm. Its subcellular location is the nucleus. It catalyses the reaction [ADP-thiazole synthase]-L-cysteine + glycine + NAD(+) = [ADP-thiazole synthase]-dehydroalanine + ADP-5-ethyl-4-methylthiazole-2-carboxylate + nicotinamide + 3 H2O + 2 H(+). Involved in biosynthesis of the thiamine precursor thiazole. Catalyzes the conversion of NAD and glycine to adenosine diphosphate 5-(2-hydroxyethyl)-4-methylthiazole-2-carboxylic acid (ADT), an adenylated thiazole intermediate. The reaction includes an iron-dependent sulfide transfer from a conserved cysteine residue of the protein to a thiazole intermediate. The enzyme can only undergo a single turnover, which suggests it is a suicide enzyme. May have additional roles in adaptation to various stress conditions and in DNA damage tolerance. In Uromyces fabae (Rust fungus), this protein is Thiamine thiazole synthase (THI2).